The sequence spans 116 residues: Putative pterin-4-alpha-carbinolamine dehydratase (116 aa).

The protein belongs to the pterin-4-alpha-carbinolamine dehydratase family.

The enzyme catalyses (4aS,6R)-4a-hydroxy-L-erythro-5,6,7,8-tetrahydrobiopterin = (6R)-L-erythro-6,7-dihydrobiopterin + H2O. This Stenotrophomonas maltophilia (strain R551-3) protein is Putative pterin-4-alpha-carbinolamine dehydratase.